Here is a 420-residue protein sequence, read N- to C-terminus: E3 ubiquitin-protein ligase pellino homolog 2 (420 aa).

The region spanning 15–202 (EPVKYGELVV…MHPRGGFTEE (188 aa)) is the FHA; atypical domain.

Belongs to the pellino family. In terms of assembly, interacts with TRAF6, IRAK1, IRAK4 and MAP3K7. Interacts with BCL10; this interaction is impaired by SOCS3. Phosphorylated by IRAK1 and IRAK4 enhancing its E3 ligase activity.

The enzyme catalyses S-ubiquitinyl-[E2 ubiquitin-conjugating enzyme]-L-cysteine + [acceptor protein]-L-lysine = [E2 ubiquitin-conjugating enzyme]-L-cysteine + N(6)-ubiquitinyl-[acceptor protein]-L-lysine.. The protein operates within protein modification; protein ubiquitination. Functionally, E3 ubiquitin ligase catalyzing the covalent attachment of ubiquitin moieties onto substrate proteins. Involved in the TLR and IL-1 signaling pathways via interaction with the complex containing IRAK kinases and TRAF6. Mediates IL1B-induced IRAK1 'Lys-63'-linked polyubiquitination and possibly 'Lys-48'-linked ubiquitination. May be important for LPS- and IL1B-induced MAP3K7-dependent, but not MAP3K3-dependent, NF-kappa-B activation. Can activate the MAP (mitogen activated protein) kinase pathway leading to activation of ELK1. The sequence is that of E3 ubiquitin-protein ligase pellino homolog 2 (PELI2) from Homo sapiens (Human).